A 146-amino-acid chain; its full sequence is Hemoglobin subunit beta (146 aa).

Positions 2-146 (PFSAHEEKLI…VAAALSAEYH (145 aa)) constitute a Globin domain. Heme b-binding residues include His-63 and His-92.

The protein belongs to the globin family. In terms of assembly, heterotetramer of two alpha chains and two beta chains. Red blood cells.

Functionally, involved in oxygen transport from the lung to the various peripheral tissues. This is Hemoglobin subunit beta (HBB) from Caiman crocodilus (Spectacled caiman).